A 422-amino-acid chain; its full sequence is MLDMKFIRENIDETERRLATRGESCTLGGFRELDQKRLALLKESEALKALRNSVSDEIARIKDKSQAQDKILQMREVSQKIKGMDDELKQVDEALQGILLTVPNLPDPATPVGKSENDNVEIRKWGTPGSYGFTPKPHWEIGEELGILDFECGAKLTGARFTLSRGAGARMERALISFMLDLHTASHGYLEVLPPFMVNRDSMTGTGQLPKFEEDLFKMTDPEYFLIPTAEVPVTNIHRGEILKKSDLPIRYAAYTPCFRREAGSYGKDTRGLIRQHQFNKVELVKFSHPSQSAEELEKLTADAEKVLQLLELPYRVMALCSADIGFSAARTYDLEVWLPGQNCYREISSCSCFGDFQARRANIRFREEEKSKPEFVHTLNGSGLAVGRTLVAILENYQQEDGSVVIPQALRPYMGGLERIQ.

Residue 229 to 231 participates in L-serine binding; that stretch reads TAE. 260 to 262 is an ATP binding site; it reads RRE. Residue Glu-283 coordinates L-serine. 347-350 lines the ATP pocket; sequence EISS. Residue Ser-383 participates in L-serine binding.

The protein belongs to the class-II aminoacyl-tRNA synthetase family. Type-1 seryl-tRNA synthetase subfamily. As to quaternary structure, homodimer. The tRNA molecule binds across the dimer.

It localises to the cytoplasm. It carries out the reaction tRNA(Ser) + L-serine + ATP = L-seryl-tRNA(Ser) + AMP + diphosphate + H(+). The enzyme catalyses tRNA(Sec) + L-serine + ATP = L-seryl-tRNA(Sec) + AMP + diphosphate + H(+). It functions in the pathway aminoacyl-tRNA biosynthesis; selenocysteinyl-tRNA(Sec) biosynthesis; L-seryl-tRNA(Sec) from L-serine and tRNA(Sec): step 1/1. Its function is as follows. Catalyzes the attachment of serine to tRNA(Ser). Is also able to aminoacylate tRNA(Sec) with serine, to form the misacylated tRNA L-seryl-tRNA(Sec), which will be further converted into selenocysteinyl-tRNA(Sec). In Pelobacter propionicus (strain DSM 2379 / NBRC 103807 / OttBd1), this protein is Serine--tRNA ligase.